A 285-amino-acid chain; its full sequence is Acetyl-coenzyme A carboxylase carboxyl transferase subunit beta (285 aa).

Positions 22–285 (LWTKCEACGA…HPGVAYAPGV (264 aa)) constitute a CoA carboxyltransferase N-terminal domain. Positions 26, 29, 45, and 48 each coordinate Zn(2+). The segment at 26–48 (CEACGAQIYKKEFQENLHVCPKC) adopts a C4-type zinc-finger fold.

This sequence belongs to the AccD/PCCB family. Acetyl-CoA carboxylase is a heterohexamer composed of biotin carboxyl carrier protein (AccB), biotin carboxylase (AccC) and two subunits each of ACCase subunit alpha (AccA) and ACCase subunit beta (AccD). Requires Zn(2+) as cofactor.

The protein localises to the cytoplasm. The catalysed reaction is N(6)-carboxybiotinyl-L-lysyl-[protein] + acetyl-CoA = N(6)-biotinyl-L-lysyl-[protein] + malonyl-CoA. It participates in lipid metabolism; malonyl-CoA biosynthesis; malonyl-CoA from acetyl-CoA: step 1/1. Component of the acetyl coenzyme A carboxylase (ACC) complex. Biotin carboxylase (BC) catalyzes the carboxylation of biotin on its carrier protein (BCCP) and then the CO(2) group is transferred by the transcarboxylase to acetyl-CoA to form malonyl-CoA. The protein is Acetyl-coenzyme A carboxylase carboxyl transferase subunit beta of Thermus thermophilus (strain ATCC BAA-163 / DSM 7039 / HB27).